The primary structure comprises 103 residues: Large ribosomal subunit protein bL21 (103 aa).

It belongs to the bacterial ribosomal protein bL21 family. As to quaternary structure, part of the 50S ribosomal subunit. Contacts protein L20.

In terms of biological role, this protein binds to 23S rRNA in the presence of protein L20. This chain is Large ribosomal subunit protein bL21, found in Clostridium botulinum (strain Alaska E43 / Type E3).